The primary structure comprises 105 residues: Integration host factor subunit beta (105 aa).

Belongs to the bacterial histone-like protein family. Heterodimer of an alpha and a beta chain.

Its function is as follows. This protein is one of the two subunits of integration host factor, a specific DNA-binding protein that functions in genetic recombination as well as in transcriptional and translational control. This chain is Integration host factor subunit beta, found in Nitrosomonas eutropha (strain DSM 101675 / C91 / Nm57).